A 399-amino-acid polypeptide reads, in one-letter code: Probable sugar efflux transporter (399 aa).

A run of 12 helical transmembrane segments spans residues 15–35 (VVTL…PVGL), 50–70 (VGMM…PFML), 81–101 (LIGL…AWSF), 103–123 (VLVI…SITS), 136–156 (AQAL…GIPI), 168–188 (MTFL…VKLL), 209–229 (PALV…YTAY), 246–266 (FATV…ILFG), 273–293 (ASGL…LLLP), 301–321 (LMLL…GMQV), 333–353 (VAMS…ALVG), and 364–384 (SIGY…LMIF).

Belongs to the major facilitator superfamily. SotB (TC 2.A.1.2) family.

The protein localises to the cell inner membrane. Its function is as follows. Involved in the efflux of sugars. The physiological role may be the reduction of the intracellular concentration of toxic sugars or sugar metabolites. The protein is Probable sugar efflux transporter of Klebsiella pneumoniae (strain 342).